The chain runs to 189 residues: MAPSCPTRSRVWSSRTSPPPDLAESEAWVVMGRVSAPFGVKGWVKVQPFSEDPGTLMDFESWRVGRGEQQAQYAVEAVQDHGKSLVAKLVGIDDRDAAFALRGQEVSVAKSALPPPEENEFYWSDLIGLTVMNREGVELGKVDSLMESGAHDLLVVKGRREHLIPFVAAFVGKVDLAGGTVEVDWGEDY.

Residues 1 to 16 (MAPSCPTRSRVWSSRT) are compositionally biased toward polar residues. Residues 1-21 (MAPSCPTRSRVWSSRTSPPPD) form a disordered region. A PRC barrel domain is found at 118-189 (ENEFYWSDLI…TVEVDWGEDY (72 aa)).

The protein belongs to the RimM family. As to quaternary structure, binds ribosomal protein uS19.

The protein resides in the cytoplasm. Its function is as follows. An accessory protein needed during the final step in the assembly of 30S ribosomal subunit, possibly for assembly of the head region. Essential for efficient processing of 16S rRNA. May be needed both before and after RbfA during the maturation of 16S rRNA. It has affinity for free ribosomal 30S subunits but not for 70S ribosomes. In Thiobacillus denitrificans (strain ATCC 25259 / T1), this protein is Ribosome maturation factor RimM.